The chain runs to 317 residues: Probable cell division protein WhiA (317 aa).

Residues 275–308 (SLKELGEMLVPKVGKSGVNHRMRKIDELAEKLEE) constitute a DNA-binding region (H-T-H motif).

The protein belongs to the WhiA family.

Involved in cell division and chromosome segregation. In Desulfitobacterium hafniense (strain Y51), this protein is Probable cell division protein WhiA.